We begin with the raw amino-acid sequence, 157 residues long: Large ribosomal subunit protein uL10 (157 aa).

The protein belongs to the universal ribosomal protein uL10 family. Part of the ribosomal stalk of the 50S ribosomal subunit. The N-terminus interacts with L11 and the large rRNA to form the base of the stalk. The C-terminus forms an elongated spine to which L12 dimers bind in a sequential fashion forming a multimeric L10(L12)X complex.

In terms of biological role, forms part of the ribosomal stalk, playing a central role in the interaction of the ribosome with GTP-bound translation factors. The sequence is that of Large ribosomal subunit protein uL10 from Campylobacter hominis (strain ATCC BAA-381 / DSM 21671 / CCUG 45161 / LMG 19568 / NCTC 13146 / CH001A).